The chain runs to 384 residues: Sodium channel protein Nach (384 aa).

Topologically, residues A1–S319 are extracellular. N-linked (GlcNAc...) asparagine glycans are attached at residues N32 and N215. The chain crosses the membrane as a helical span at residues L320–L340. Over R341 to N384 the chain is Cytoplasmic.

The protein belongs to the amiloride-sensitive sodium channel (TC 1.A.6) family.

It is found in the membrane. In terms of biological role, part of a complex that plays a role in tracheal liquid clearance. Probable role in sodium transport. The chain is Sodium channel protein Nach (Nach) from Drosophila virilis (Fruit fly).